We begin with the raw amino-acid sequence, 160 residues long: Cytochrome b6-f complex subunit 4 (160 aa).

A run of 3 helical transmembrane segments spans residues 36 to 56, 95 to 115, and 131 to 151; these read LLYI…GLSV, LLGV…PFIE, and TVFL…ALPI.

Belongs to the cytochrome b family. PetD subfamily. The 4 large subunits of the cytochrome b6-f complex are cytochrome b6, subunit IV (17 kDa polypeptide, petD), cytochrome f and the Rieske protein, while the 4 small subunits are petG, petL, petM and petN. The complex functions as a dimer.

The protein resides in the plastid. It localises to the chloroplast thylakoid membrane. In terms of biological role, component of the cytochrome b6-f complex, which mediates electron transfer between photosystem II (PSII) and photosystem I (PSI), cyclic electron flow around PSI, and state transitions. The polypeptide is Cytochrome b6-f complex subunit 4 (Chlorella vulgaris (Green alga)).